The primary structure comprises 426 residues: Protein arginine N-methyltransferase 2 (426 aa).

Disordered regions lie at residues aspartate 65 to serine 88 and aspartate 155 to alanine 175. Residues asparagine 73–serine 88 show a composition bias toward polar residues. A compositionally biased stretch (acidic residues) spans aspartate 155–glutamine 168. In terms of domain architecture, RMT2 spans proline 207–aspartate 426. S-adenosyl-L-methionine contacts are provided by residues tyrosine 214, methionine 243, histidine 263 to valine 268, glutamate 284 to histidine 286, tryptophan 311 to glutamine 312, and aspartate 331.

The protein belongs to the class I-like SAM-binding methyltransferase superfamily. RMT2 methyltransferase family. In terms of assembly, monomer.

The protein resides in the cytoplasm. The protein localises to the nucleus. Functionally, S-adenosyl-L-methionine-dependent protein-arginine N-methyltransferase that methylates the delta-nitrogen atom of arginine residues to form N5-methylarginine (type IV) in target proteins. Monomethylates ribosomal protein L12. The polypeptide is Protein arginine N-methyltransferase 2 (Emericella nidulans (strain FGSC A4 / ATCC 38163 / CBS 112.46 / NRRL 194 / M139) (Aspergillus nidulans)).